The primary structure comprises 316 residues: tRNA dimethylallyltransferase (316 aa).

Residue 14-21 (GPTAVGKT) coordinates ATP. 16–21 (TAVGKT) lines the substrate pocket. Residues 39–42 (DSMQ) are interaction with substrate tRNA.

The protein belongs to the IPP transferase family. As to quaternary structure, monomer. Mg(2+) serves as cofactor.

It carries out the reaction adenosine(37) in tRNA + dimethylallyl diphosphate = N(6)-dimethylallyladenosine(37) in tRNA + diphosphate. Its function is as follows. Catalyzes the transfer of a dimethylallyl group onto the adenine at position 37 in tRNAs that read codons beginning with uridine, leading to the formation of N6-(dimethylallyl)adenosine (i(6)A). The protein is tRNA dimethylallyltransferase of Bacillus cytotoxicus (strain DSM 22905 / CIP 110041 / 391-98 / NVH 391-98).